Here is a 184-residue protein sequence, read N- to C-terminus: UPF0397 protein SA2477 (184 aa).

A run of 5 helical transmembrane segments spans residues 11-31, 44-64, 77-97, 111-131, and 148-168; these read VVAIGIGAAVFVILGRFVVIP, AFLALISAIFGPFAGLMTGLV, AWWSWVICSGIIGCLYGWIGL, MIYFNIGQIIANIICWALIAP, and QGVISAVLNIISVGIIGTILL.

It belongs to the UPF0397 family.

It is found in the cell membrane. The chain is UPF0397 protein SA2477 from Staphylococcus aureus (strain N315).